Here is a 359-residue protein sequence, read N- to C-terminus: Protein mab-21-like 2 (359 aa).

This sequence belongs to the mab-21 family. In terms of tissue distribution, expressed in the adult cerebellum and eye, with lower levels in the adult forebrain. In embryos at 10.5 days post-coitum strongly expressed in the rostral and distal regions of the developing neural retina, with no expression immediately adjacent to the closing optic fissure. Expression is also observed in the dorsal and ventral aspects of the developing forelimb bud and in the developing pharyngeal arches, as well as in the midbrain.

It is found in the nucleus. The protein localises to the cytoplasm. Functionally, required for several aspects of embryonic development including normal development of the eye, notochord, neural tube and other organ tissues, and for embryonic turning. The sequence is that of Protein mab-21-like 2 (Mab21l2) from Mus musculus (Mouse).